The chain runs to 486 residues: Cobyric acid synthase (486 aa).

The GATase cobBQ-type domain maps to 251 to 439 (RAKIVVPMLS…VHGLFERGEA (189 aa)). Cys333 serves as the catalytic Nucleophile. His431 is an active-site residue.

It belongs to the CobB/CobQ family. CobQ subfamily.

It participates in cofactor biosynthesis; adenosylcobalamin biosynthesis. In terms of biological role, catalyzes amidations at positions B, D, E, and G on adenosylcobyrinic A,C-diamide. NH(2) groups are provided by glutamine, and one molecule of ATP is hydrogenolyzed for each amidation. The chain is Cobyric acid synthase from Caulobacter sp. (strain K31).